The primary structure comprises 437 residues: RING finger protein 150 (437 aa).

A signal peptide spans 1–34; sequence MTMSLIQACRSLALSTWLLSFCFVHLLCLDFTVA. Over 35 to 207 the chain is Extracellular; it reads EKEEWYTAFV…NLQKYVSRTS (173 aa). N-linked (GlcNAc...) asparagine glycosylation is found at N45, N124, N152, and N185. Residues 80–182 enclose the PA domain; sequence SPKQDARGEV…PKGKEIVSLL (103 aa). The helical transmembrane segment at 208–228 threads the bilayer; it reads VVFVSISFIVLMIISLAWLVF. Over 229-437 the chain is Cytoplasmic; that stretch reads YYIQRFRYAN…TDQDCEEVKS (209 aa). The RING-type; atypical zinc finger occupies 277–318; the sequence is CAVCIEGYKPNDVVRILPCRHLFHKSCVDPWLLDHRTCPMCK.

It localises to the membrane. The polypeptide is RING finger protein 150 (Rnf150) (Mus musculus (Mouse)).